A 458-amino-acid polypeptide reads, in one-letter code: MSITKEFDTITAISTPLGEGAIGIVRLSGTDALAIAQSVFKGKNLEQVASHTINYGHIINPKTGTIIDEVMVSVMLAPKTFTRENVVEINTHGGIAVTNEILQLLIRQGARMAEPGEFTKRAFLNGRVDLTQAEAVMDIIRAKTDKAMTIAVKQLDGSLSQLINDTRQEILNTLAQVEVNIDYPEYDDVEEMTTALLREKTQEFQSLLESLLRTAKRGKILREGLSTAIIGRPNVGKSSLLNNLLREDKAIVTDIAGTTRDVIEEYVNIKGVPLKLVDTAGIRETDDLVEQIGVERSKKALQEADLVLLVLNASEKLTDQDRALLNLSQDSNRIILLNKTDLEQKIELEQLPDDYIPISVLTNQNINLIEDRINQLFFDNAGLVEQDATYLSNARHISLIEKAVQSLEAVNDGLALGMPVDLLQVDLTRTWEILGEITGDAAPDELITQLFSQFCLGK.

Positions 26, 88, and 127 each coordinate (6S)-5-formyl-5,6,7,8-tetrahydrofolate. The region spanning 224–378 (GLSTAIIGRP…IEDRINQLFF (155 aa)) is the TrmE-type G domain. Asn-234 lines the K(+) pocket. GTP contacts are provided by residues 234-239 (NVGKSS), 253-259 (TDIAGTT), and 278-281 (DTAG). Ser-238 contributes to the Mg(2+) binding site. K(+) contacts are provided by Thr-253, Ile-255, and Thr-258. Thr-259 provides a ligand contact to Mg(2+). Lys-458 provides a ligand contact to (6S)-5-formyl-5,6,7,8-tetrahydrofolate.

This sequence belongs to the TRAFAC class TrmE-Era-EngA-EngB-Septin-like GTPase superfamily. TrmE GTPase family. In terms of assembly, homodimer. Heterotetramer of two MnmE and two MnmG subunits. K(+) is required as a cofactor.

It is found in the cytoplasm. Functionally, exhibits a very high intrinsic GTPase hydrolysis rate. Involved in the addition of a carboxymethylaminomethyl (cmnm) group at the wobble position (U34) of certain tRNAs, forming tRNA-cmnm(5)s(2)U34. This chain is tRNA modification GTPase MnmE, found in Streptococcus pyogenes serotype M1.